A 164-amino-acid chain; its full sequence is 6,7-dimethyl-8-ribityllumazine synthase (164 aa).

5-amino-6-(D-ribitylamino)uracil-binding positions include Tyr30, 61–63 (ALE), and 85–87 (CVI). 90–91 (ET) contributes to the (2S)-2-hydroxy-3-oxobutyl phosphate binding site. His93 acts as the Proton donor in catalysis. Asn118 serves as a coordination point for 5-amino-6-(D-ribitylamino)uracil. Arg132 lines the (2S)-2-hydroxy-3-oxobutyl phosphate pocket.

It belongs to the DMRL synthase family.

The catalysed reaction is (2S)-2-hydroxy-3-oxobutyl phosphate + 5-amino-6-(D-ribitylamino)uracil = 6,7-dimethyl-8-(1-D-ribityl)lumazine + phosphate + 2 H2O + H(+). Its pathway is cofactor biosynthesis; riboflavin biosynthesis; riboflavin from 2-hydroxy-3-oxobutyl phosphate and 5-amino-6-(D-ribitylamino)uracil: step 1/2. Functionally, catalyzes the formation of 6,7-dimethyl-8-ribityllumazine by condensation of 5-amino-6-(D-ribitylamino)uracil with 3,4-dihydroxy-2-butanone 4-phosphate. This is the penultimate step in the biosynthesis of riboflavin. This Methylobacterium radiotolerans (strain ATCC 27329 / DSM 1819 / JCM 2831 / NBRC 15690 / NCIMB 10815 / 0-1) protein is 6,7-dimethyl-8-ribityllumazine synthase.